The chain runs to 446 residues: Minor fimbrium tip subunit Mfa3 (446 aa).

The first 20 residues, 1-20 (MMQLKKRYFALILLLFLWSG), serve as a signal peptide directing secretion. Residue Cys21 is the site of N-palmitoyl cysteine attachment. The S-diacylglycerol cysteine moiety is linked to residue Cys21. A propeptide spanning residues 21–43 (CDRGVDPQPDPLQPDVYLLVNAR) is cleaved from the precursor.

It belongs to the bacteroidetes fimbrillin superfamily. FimB/Mfa2 family. As to quaternary structure, component of the fimbrium tip. Minor fimbriae are composed of a structural subunit, most often Mfa1, and the accessory subunits Mfa3, Mfa4 and Mfa5. Fimbrium assembly occurs by linear, head-to-tail oligomerization of fimbrial subunits. This is mediated via insertion of a C-terminal beta-strand from one subunit into a groove in the N-terminal domain of the following subunit. Mfa3 is required for Mfa4 and Mfa5 insertion into the fimbrium.

It is found in the fimbrium. Its subcellular location is the cell outer membrane. In terms of biological role, tip subunit of the minor fimbriae. These filamentous pili are attached to the cell surface; they mediate biofilm formation, adhesion onto host cells and onto other bacteria that are part of the oral microbiome. They play an important role in invasion of periodontal tissues and are recognized as major virulence factors. Fimbrium subunits from different strains have highly divergent sequences, and this correlates with pathogenicity. This is Minor fimbrium tip subunit Mfa3 (mfa3) from Porphyromonas gingivalis (strain ATCC 33277 / DSM 20709 / CIP 103683 / JCM 12257 / NCTC 11834 / 2561).